A 483-amino-acid chain; its full sequence is Allantoate deiminase 2 (483 aa).

Positions Met1–Met30 are cleaved as a signal peptide. The Mn(2+) site is built by His125, Asp136, Glu173, His239, and His457.

This sequence belongs to the peptidase M20A family. In terms of assembly, homodimer. The cofactor is Mn(2+). Expressed in stems and leaves, and at low levels in roots. Not detected in nodules.

The protein resides in the endoplasmic reticulum. The catalysed reaction is allantoate + H2O + 2 H(+) = (S)-2-ureidoglycine + NH4(+) + CO2. Its function is as follows. Involved in the catabolism of purine nucleotides. Can use allantoate as substrate. The sequential activity of AAH, UGLYAH and UAH allows a complete purine breakdown without the intermediate generation of urea. This is Allantoate deiminase 2 from Glycine max (Soybean).